Consider the following 186-residue polypeptide: MFTQSIPECYSCKQPITEICLTAFGLQWHPHHIGCNVCGKDFSDGSRCEEGPDGFAYCSKDLLDKFAPKCQKCKQAIIGQTTNAVGKTYHPEHFQCETCNMVLTGNFYHTDDGTPFCEKHYYEKIGFLCRHCDKPIISGKCITVGTTRFHPEHFFCQFCKSNLSGVGYKKQGDKCYCNECFLKLYG.

LIM zinc-binding domains are found at residues 7 to 67 (PECY…DKFA), 68 to 127 (PKCQ…KIGF), and 128 to 186 (LCRH…KLYG).

This chain is LIM domain-containing protein DDB_G0271356, found in Dictyostelium discoideum (Social amoeba).